The primary structure comprises 123 residues: Large ribosomal subunit protein bL12 (123 aa).

The protein belongs to the bacterial ribosomal protein bL12 family. Homodimer. Part of the ribosomal stalk of the 50S ribosomal subunit. Forms a multimeric L10(L12)X complex, where L10 forms an elongated spine to which 2 to 4 L12 dimers bind in a sequential fashion. Binds GTP-bound translation factors.

Functionally, forms part of the ribosomal stalk which helps the ribosome interact with GTP-bound translation factors. Is thus essential for accurate translation. This Bartonella bacilliformis (strain ATCC 35685 / KC583 / Herrer 020/F12,63) protein is Large ribosomal subunit protein bL12.